We begin with the raw amino-acid sequence, 340 residues long: Probable ribonucleoside hydrolase (340 aa).

Ca(2+) is bound at residue Asp-14. Position 18 (Asp-18) interacts with substrate. The Ca(2+) site is built by Asp-19 and Thr-139. Asn-172, Glu-178, and Asn-180 together coordinate substrate. The active-site Proton donor is the His-259. Ca(2+) is bound at residue Asp-260.

This sequence belongs to the IUNH family. The cofactor is Ca(2+).

The enzyme catalyses a purine D-ribonucleoside + H2O = a purine nucleobase + D-ribose. It carries out the reaction a pyrimidine ribonucleoside + H2O = a pyrimidine nucleobase + D-ribose. Its pathway is purine metabolism; purine nucleoside salvage. Functionally, catalyzes the hydrolysis of the N-glycosidic bond of purine and/or pyrimidine nucleosides into ribose and the base. The polypeptide is Probable ribonucleoside hydrolase (iunH) (Dictyostelium discoideum (Social amoeba)).